A 426-amino-acid chain; its full sequence is Gamma-glutamyl phosphate reductase (426 aa).

The protein belongs to the gamma-glutamyl phosphate reductase family.

It localises to the cytoplasm. The enzyme catalyses L-glutamate 5-semialdehyde + phosphate + NADP(+) = L-glutamyl 5-phosphate + NADPH + H(+). Its pathway is amino-acid biosynthesis; L-proline biosynthesis; L-glutamate 5-semialdehyde from L-glutamate: step 2/2. Catalyzes the NADPH-dependent reduction of L-glutamate 5-phosphate into L-glutamate 5-semialdehyde and phosphate. The product spontaneously undergoes cyclization to form 1-pyrroline-5-carboxylate. The protein is Gamma-glutamyl phosphate reductase of Cupriavidus metallidurans (strain ATCC 43123 / DSM 2839 / NBRC 102507 / CH34) (Ralstonia metallidurans).